A 78-amino-acid polypeptide reads, in one-letter code: Large ribosomal subunit protein bL28 (78 aa).

The tract at residues 1-25 is disordered; the sequence is MSRVCQVTGKRPTVGNNRSHAKNAT.

Belongs to the bacterial ribosomal protein bL28 family.

The polypeptide is Large ribosomal subunit protein bL28 (Tolumonas auensis (strain DSM 9187 / NBRC 110442 / TA 4)).